The chain runs to 256 residues: Phosphoribosylaminoimidazole-succinocarboxamide synthase (256 aa).

The protein belongs to the SAICAR synthetase family.

It carries out the reaction 5-amino-1-(5-phospho-D-ribosyl)imidazole-4-carboxylate + L-aspartate + ATP = (2S)-2-[5-amino-1-(5-phospho-beta-D-ribosyl)imidazole-4-carboxamido]succinate + ADP + phosphate + 2 H(+). It participates in purine metabolism; IMP biosynthesis via de novo pathway; 5-amino-1-(5-phospho-D-ribosyl)imidazole-4-carboxamide from 5-amino-1-(5-phospho-D-ribosyl)imidazole-4-carboxylate: step 1/2. The protein is Phosphoribosylaminoimidazole-succinocarboxamide synthase of Synechococcus sp. (strain JA-3-3Ab) (Cyanobacteria bacterium Yellowstone A-Prime).